A 482-amino-acid polypeptide reads, in one-letter code: MVQIVPHVANAHMVKTSRKGLLALVVVGVEECCPTRRCDLRDPNLVVDSNCLLSRSTHQSSLVEDSIIINHFRILNFNNRASIFLCLRIGVICSTQSKMYGGKSYILKGSVSLSLIILILLVTTLLVSAKNQPRISLIEVKTCNLAKGEWVEDKKRPLYSGFECKQWLSNIFSCRVMGRPDFSFEGYRWQPEGCNIPEFNRVNFLRRMQNKTIAFIGDSLGREQFQSLMCMATGGKESPEVQNVGSEYGLVIPKGAPRPGGWAYRFPTTNTTVLSYWSASLTDLVPMNNTDPPHLIAMHLDRPPAFIRNYLHRFHVLVLNTGHHWSRDKIEKNHWVMHVNGTRVEGGYFKNVENAKIFTIHSLVKWLDAQLPLHPRLKAFFTTISPRHEKCNNTIPLSRGSKITGEGGSLDTIVESAVNGTRVKILDITALSKLRDEAHIAGCKLKPKKASNVTSAPTFNDCLHWCLPGIPDTWNELLIAQL.

The chain crosses the membrane as a helical; Signal-anchor for type II membrane protein span at residues 109–129 (GSVSLSLIILILLVTTLLVSA). The short motif at 217 to 219 (GDS) is the GDS motif element. Residues 461 to 475 (DCLHWCLPGIPDTWN) carry the DCXHWCLPGXXDXWN motif motif.

The protein belongs to the PC-esterase family. TBL subfamily.

Its subcellular location is the membrane. May act as a bridging protein that binds pectin and other cell wall polysaccharides. Probably involved in maintaining esterification of pectins. May be involved in the specific O-acetylation of cell wall polymers. This Arabidopsis thaliana (Mouse-ear cress) protein is Protein trichome birefringence-like 15 (TBL15).